The sequence spans 275 residues: 4-hydroxy-3-methylbut-2-enyl diphosphate reductase (275 aa).

Position 12 (Cys-12) interacts with [4Fe-4S] cluster. His-40 and His-70 together coordinate (2E)-4-hydroxy-3-methylbut-2-enyl diphosphate. Dimethylallyl diphosphate-binding residues include His-40 and His-70. Isopentenyl diphosphate is bound by residues His-40 and His-70. A [4Fe-4S] cluster-binding site is contributed by Cys-92. His-119 is a (2E)-4-hydroxy-3-methylbut-2-enyl diphosphate binding site. A dimethylallyl diphosphate-binding site is contributed by His-119. His-119 lines the isopentenyl diphosphate pocket. Glu-121 acts as the Proton donor in catalysis. Residue Thr-151 coordinates (2E)-4-hydroxy-3-methylbut-2-enyl diphosphate. Position 181 (Cys-181) interacts with [4Fe-4S] cluster. Residues Ser-209, Ser-210, Asn-211, and Ser-251 each coordinate (2E)-4-hydroxy-3-methylbut-2-enyl diphosphate. Ser-209, Ser-210, Asn-211, and Ser-251 together coordinate dimethylallyl diphosphate. 4 residues coordinate isopentenyl diphosphate: Ser-209, Ser-210, Asn-211, and Ser-251.

The protein belongs to the IspH family. Requires [4Fe-4S] cluster as cofactor.

It catalyses the reaction isopentenyl diphosphate + 2 oxidized [2Fe-2S]-[ferredoxin] + H2O = (2E)-4-hydroxy-3-methylbut-2-enyl diphosphate + 2 reduced [2Fe-2S]-[ferredoxin] + 2 H(+). The enzyme catalyses dimethylallyl diphosphate + 2 oxidized [2Fe-2S]-[ferredoxin] + H2O = (2E)-4-hydroxy-3-methylbut-2-enyl diphosphate + 2 reduced [2Fe-2S]-[ferredoxin] + 2 H(+). Its pathway is isoprenoid biosynthesis; dimethylallyl diphosphate biosynthesis; dimethylallyl diphosphate from (2E)-4-hydroxy-3-methylbutenyl diphosphate: step 1/1. It functions in the pathway isoprenoid biosynthesis; isopentenyl diphosphate biosynthesis via DXP pathway; isopentenyl diphosphate from 1-deoxy-D-xylulose 5-phosphate: step 6/6. Functionally, catalyzes the conversion of 1-hydroxy-2-methyl-2-(E)-butenyl 4-diphosphate (HMBPP) into a mixture of isopentenyl diphosphate (IPP) and dimethylallyl diphosphate (DMAPP). Acts in the terminal step of the DOXP/MEP pathway for isoprenoid precursor biosynthesis. In Thermotoga sp. (strain RQ2), this protein is 4-hydroxy-3-methylbut-2-enyl diphosphate reductase.